We begin with the raw amino-acid sequence, 169 residues long: Sorting nexin-24 (169 aa).

The residue at position 1 (Met1) is an N-acetylmethionine. One can recognise a PX domain in the interval 1–125 (MEVYIPSFRH…SFDETESEES (125 aa)). Residues Arg38, Ser40, Lys61, and Arg74 each contribute to the a 1,2-diacyl-sn-glycero-3-phospho-(1D-myo-inositol-3-phosphate) site. Phosphoserine occurs at positions 113 and 116.

It belongs to the sorting nexin family.

Its subcellular location is the cytoplasmic vesicle membrane. May be involved in several stages of intracellular trafficking. The sequence is that of Sorting nexin-24 (Snx24) from Rattus norvegicus (Rat).